The sequence spans 305 residues: Lysosomal thioesterase PPT2 (305 aa).

Residues 1–32 form the signal peptide; that stretch reads MLGLPERRLPSAEFLLLLPFLLLLLLLLPAAP. 2 cysteine pairs are disulfide-bonded: Cys112/Cys120 and Cys168/Cys179. Ser114 (nucleophile) is an active-site residue. The N-linked (GlcNAc...) asparagine glycan is linked to Asn193. Residues Asp231 and His286 contribute to the active site. Residues Cys279 and Cys299 are joined by a disulfide bond.

It belongs to the palmitoyl-protein thioesterase family.

Its subcellular location is the lysosome. The enzyme catalyses hexadecanoyl-CoA + H2O = hexadecanoate + CoA + H(+). It catalyses the reaction S-hexadecanoyl-N-acetylcysteamine + H2O = N-acetylcysteamine + hexadecanoate + H(+). Catalyzes the cleavage of thioester bonds from S-palmitoyl-CoA or S-palmitoyl-N-acetylcysteamine (unbranched structures) but does not have activity against palmitoylcysteine or palmitoylated proteins, branched structures or bulky head groups. Conversely, hydrolyzes both long and short chain fatty acyl-CoA substrate. This Bos taurus (Bovine) protein is Lysosomal thioesterase PPT2 (PPT2).